Consider the following 339-residue polypeptide: F420-dependent glucose-6-phosphate dehydrogenase (339 aa).

Asp-41 is a coenzyme F420-(gamma-Glu)n binding site. Residue His-42 is the Proton donor of the active site. Residues Thr-78 and Thr-109 to Gly-110 each bind coenzyme F420-(gamma-Glu)n. Catalysis depends on Glu-111, which acts as the Proton acceptor. Coenzyme F420-(gamma-Glu)n contacts are provided by residues Asn-114, Ser-177–Gly-178, and Ala-180–Ala-181. Thr-195, Lys-198, Lys-259, and Arg-283 together coordinate substrate.

This sequence belongs to the F420-dependent glucose-6-phosphate dehydrogenase family. In terms of assembly, homodimer.

The enzyme catalyses oxidized coenzyme F420-(gamma-L-Glu)(n) + D-glucose 6-phosphate + H(+) = 6-phospho-D-glucono-1,5-lactone + reduced coenzyme F420-(gamma-L-Glu)(n). In terms of biological role, catalyzes the coenzyme F420-dependent oxidation of glucose 6-phosphate (G6P) to 6-phosphogluconolactone. The chain is F420-dependent glucose-6-phosphate dehydrogenase from Nakamurella multipartita (strain ATCC 700099 / DSM 44233 / CIP 104796 / JCM 9543 / NBRC 105858 / Y-104) (Microsphaera multipartita).